A 273-amino-acid chain; its full sequence is Dermonecrotic toxin LhSicTox-alphaIA2bii (273 aa).

Residue His5 is part of the active site. Mg(2+) contacts are provided by Glu25 and Asp27. The Nucleophile role is filled by His41. Disulfide bonds link Cys45–Cys51 and Cys47–Cys190. Asp85 is a Mg(2+) binding site.

It belongs to the arthropod phospholipase D family. Class II subfamily. It depends on Mg(2+) as a cofactor. As to expression, expressed by the venom gland.

Its subcellular location is the secreted. The enzyme catalyses an N-(acyl)-sphingosylphosphocholine = an N-(acyl)-sphingosyl-1,3-cyclic phosphate + choline. It catalyses the reaction an N-(acyl)-sphingosylphosphoethanolamine = an N-(acyl)-sphingosyl-1,3-cyclic phosphate + ethanolamine. The catalysed reaction is a 1-acyl-sn-glycero-3-phosphocholine = a 1-acyl-sn-glycero-2,3-cyclic phosphate + choline. It carries out the reaction a 1-acyl-sn-glycero-3-phosphoethanolamine = a 1-acyl-sn-glycero-2,3-cyclic phosphate + ethanolamine. Its function is as follows. Dermonecrotic toxins cleave the phosphodiester linkage between the phosphate and headgroup of certain phospholipids (sphingolipid and lysolipid substrates), forming an alcohol (often choline) and a cyclic phosphate. This toxin acts on sphingomyelin (SM). It may also act on ceramide phosphoethanolamine (CPE), lysophosphatidylcholine (LPC) and lysophosphatidylethanolamine (LPE), but not on lysophosphatidylserine (LPS), and lysophosphatidylglycerol (LPG). It acts by transphosphatidylation, releasing exclusively cyclic phosphate products as second products. Induces dermonecrosis, hemolysis, increased vascular permeability, edema, inflammatory response, and platelet aggregation. The polypeptide is Dermonecrotic toxin LhSicTox-alphaIA2bii (Loxosceles hirsuta (Recluse spider)).